We begin with the raw amino-acid sequence, 1023 residues long: Exportin-T (1023 aa).

Belongs to the exportin family.

Its subcellular location is the nucleus. The protein localises to the cytoplasm. Functionally, tRNA nucleus export receptor which facilitates tRNA translocation across the nuclear pore complex. Involved in pre-tRNA splicing, probably by affecting the interaction of pre-tRNA with splicing endonuclease. This is Exportin-T (los1) from Sclerotinia sclerotiorum (strain ATCC 18683 / 1980 / Ss-1) (White mold).